The chain runs to 217 residues: Probable rhamnogalacturonan acetylesterase YesY (217 aa).

Ser-11 (nucleophile) is an active-site residue. Catalysis depends on residues Glu-178 and His-185.

The protein belongs to the 'GDSL' lipolytic enzyme family.

Functionally, may play a role in the degradation of rhamnogalacturonan derived from plant cell walls. Probably has broad substrate specificity and may degrade several types of acetylated substrates. This Bacillus subtilis (strain 168) protein is Probable rhamnogalacturonan acetylesterase YesY (yesY).